Consider the following 120-residue polypeptide: Large ribosomal subunit protein uL18 (120 aa).

The protein belongs to the universal ribosomal protein uL18 family. In terms of assembly, part of the 50S ribosomal subunit; part of the 5S rRNA/L5/L18/L25 subcomplex. Contacts the 5S and 23S rRNAs.

In terms of biological role, this is one of the proteins that bind and probably mediate the attachment of the 5S RNA into the large ribosomal subunit, where it forms part of the central protuberance. This is Large ribosomal subunit protein uL18 from Hyphomonas neptunium (strain ATCC 15444).